The primary structure comprises 1164 residues: Protein PLASTID MOVEMENT IMPAIRED 1-RELATED 1 (1164 aa).

A disordered region spans residues 30–54 (KNPRGSVAGSNKTPTKPLSRSNLAE). Positions 37–51 (AGSNKTPTKPLSRSN) are enriched in polar residues. The region spanning 69–217 (INHVRNRRFN…TLSMSFGYTV (149 aa)) is the C2 NT-type domain. Over residues 224-263 (PASSGSTQNFRSSSNVKQTSNNTGLTRAISAKSSLGNGKS) the composition is skewed to polar residues. Disordered regions lie at residues 224–268 (PASS…SRRY), 466–486 (APEE…PKDA), 1038–1063 (SELK…PMEE), and 1124–1164 (GSAK…IMPK). Composition is skewed to basic and acidic residues over residues 469–486 (EGNK…PKDA) and 1052–1062 (SDAKKEEKPME).

It localises to the cytoplasm. Its function is as follows. Together with PMI1, necessary for chloroplast and nuclear photorelocation movements via the regulation of chloroplast-actin (cp-actin) filaments in pavement cells. The sequence is that of Protein PLASTID MOVEMENT IMPAIRED 1-RELATED 1 from Arabidopsis thaliana (Mouse-ear cress).